Consider the following 1874-residue polypeptide: Protein TIC 214 (1874 aa).

The next 6 helical transmembrane spans lie at 18 to 38, 64 to 84, 87 to 107, 124 to 144, 172 to 192, and 221 to 241; these read IINS…FSIG, FITG…HLAL, PHTI…WNNH, LSIQ…YFIL, VGWL…LVWI, and IFSI…PSPI. Disordered stretches follow at residues 248-310 and 1567-1624; these read ETSK…EIRV and KTEC…NEED. The segment covering 255 to 268 has biased composition (acidic residues); that stretch reads GVESEEEGDVEIET. Basic and acidic residues-rich tracts occupy residues 298–310 and 1584–1601; these read DSNK…EIRV and NQKE…RSDA.

It belongs to the TIC214 family. As to quaternary structure, part of the Tic complex.

The protein resides in the plastid. It is found in the chloroplast inner membrane. Involved in protein precursor import into chloroplasts. May be part of an intermediate translocation complex acting as a protein-conducting channel at the inner envelope. The chain is Protein TIC 214 from Coffea arabica (Arabian coffee).